A 74-amino-acid chain; its full sequence is Cell division protein ZapB (74 aa).

Residues 2–74 (TLDLLEQLES…LVGKIEETES (73 aa)) are a coiled coil.

The protein belongs to the ZapB family. As to quaternary structure, homodimer. The ends of the coiled-coil dimer bind to each other, forming polymers. Interacts with FtsZ.

It localises to the cytoplasm. In terms of biological role, non-essential, abundant cell division factor that is required for proper Z-ring formation. It is recruited early to the divisome by direct interaction with FtsZ, stimulating Z-ring assembly and thereby promoting cell division earlier in the cell cycle. Its recruitment to the Z-ring requires functional FtsA or ZipA. This chain is Cell division protein ZapB, found in Psychromonas ingrahamii (strain DSM 17664 / CCUG 51855 / 37).